Consider the following 231-residue polypeptide: 5'-methylthioadenosine/S-adenosylhomocysteine nucleosidase (231 aa).

The active-site Proton acceptor is glutamate 12. Substrate is bound by residues glycine 78, valine 153, and 174-175; that span reads ME. Residue aspartate 198 is the Proton donor of the active site.

It belongs to the PNP/UDP phosphorylase family. MtnN subfamily.

The enzyme catalyses S-adenosyl-L-homocysteine + H2O = S-(5-deoxy-D-ribos-5-yl)-L-homocysteine + adenine. The catalysed reaction is S-methyl-5'-thioadenosine + H2O = 5-(methylsulfanyl)-D-ribose + adenine. It carries out the reaction 5'-deoxyadenosine + H2O = 5-deoxy-D-ribose + adenine. It functions in the pathway amino-acid biosynthesis; L-methionine biosynthesis via salvage pathway; S-methyl-5-thio-alpha-D-ribose 1-phosphate from S-methyl-5'-thioadenosine (hydrolase route): step 1/2. Functionally, catalyzes the irreversible cleavage of the glycosidic bond in both 5'-methylthioadenosine (MTA) and S-adenosylhomocysteine (SAH/AdoHcy) to adenine and the corresponding thioribose, 5'-methylthioribose and S-ribosylhomocysteine, respectively. Also cleaves 5'-deoxyadenosine, a toxic by-product of radical S-adenosylmethionine (SAM) enzymes, into 5-deoxyribose and adenine. The protein is 5'-methylthioadenosine/S-adenosylhomocysteine nucleosidase of Vibrio campbellii (strain ATCC BAA-1116).